The following is a 453-amino-acid chain: Ribosomal protein uS12 methylthiotransferase RimO (453 aa).

Residues 4-120 enclose the MTTase N-terminal domain; sequence TSVHIVSLGC…IADHLRVLME (117 aa). [4Fe-4S] cluster is bound by residues Cys13, Cys49, Cys83, Cys161, Cys165, and Cys168. One can recognise a Radical SAM core domain in the interval 147-377; it reads STPPYSAYLK…MEEQAVISHE (231 aa). Positions 380–450 constitute a TRAM domain; sequence QTLVGSLQEV…DYDLFAEVIS (71 aa).

It belongs to the methylthiotransferase family. RimO subfamily. [4Fe-4S] cluster is required as a cofactor.

Its subcellular location is the cytoplasm. The catalysed reaction is L-aspartate(89)-[ribosomal protein uS12]-hydrogen + (sulfur carrier)-SH + AH2 + 2 S-adenosyl-L-methionine = 3-methylsulfanyl-L-aspartate(89)-[ribosomal protein uS12]-hydrogen + (sulfur carrier)-H + 5'-deoxyadenosine + L-methionine + A + S-adenosyl-L-homocysteine + 2 H(+). Its function is as follows. Catalyzes the methylthiolation of an aspartic acid residue of ribosomal protein uS12. This chain is Ribosomal protein uS12 methylthiotransferase RimO, found in Syntrophus aciditrophicus (strain SB).